A 177-amino-acid chain; its full sequence is Peptide methionine sulfoxide reductase MsrA (177 aa).

Cysteine 15 is a catalytic residue.

The protein belongs to the MsrA Met sulfoxide reductase family.

The catalysed reaction is L-methionyl-[protein] + [thioredoxin]-disulfide + H2O = L-methionyl-(S)-S-oxide-[protein] + [thioredoxin]-dithiol. It catalyses the reaction [thioredoxin]-disulfide + L-methionine + H2O = L-methionine (S)-S-oxide + [thioredoxin]-dithiol. In terms of biological role, has an important function as a repair enzyme for proteins that have been inactivated by oxidation. Catalyzes the reversible oxidation-reduction of methionine sulfoxide in proteins to methionine. The protein is Peptide methionine sulfoxide reductase MsrA of Listeria welshimeri serovar 6b (strain ATCC 35897 / DSM 20650 / CCUG 15529 / CIP 8149 / NCTC 11857 / SLCC 5334 / V8).